We begin with the raw amino-acid sequence, 170 residues long: Transmembrane protein 252 (170 aa).

2 helical membrane passes run 8-28 (ILCA…AFFI) and 40-60 (LIAA…GIFW). Positions 112–147 (CPAEREASGIPPPLYTETGLEFQDGNDSHPEAPPSY) are disordered.

It localises to the membrane. This Homo sapiens (Human) protein is Transmembrane protein 252 (TMEM252).